The sequence spans 176 residues: ATP synthase subunit b (176 aa).

Residues 18-38 (FGLDATVWVSIAMLVFLGILV) form a helical membrane-spanning segment.

It belongs to the ATPase B chain family. In terms of assembly, F-type ATPases have 2 components, F(1) - the catalytic core - and F(0) - the membrane proton channel. F(1) has five subunits: alpha(3), beta(3), gamma(1), delta(1), epsilon(1). F(0) has three main subunits: a(1), b(2) and c(10-14). The alpha and beta chains form an alternating ring which encloses part of the gamma chain. F(1) is attached to F(0) by a central stalk formed by the gamma and epsilon chains, while a peripheral stalk is formed by the delta and b chains.

The protein localises to the cell inner membrane. Its function is as follows. F(1)F(0) ATP synthase produces ATP from ADP in the presence of a proton or sodium gradient. F-type ATPases consist of two structural domains, F(1) containing the extramembraneous catalytic core and F(0) containing the membrane proton channel, linked together by a central stalk and a peripheral stalk. During catalysis, ATP synthesis in the catalytic domain of F(1) is coupled via a rotary mechanism of the central stalk subunits to proton translocation. Component of the F(0) channel, it forms part of the peripheral stalk, linking F(1) to F(0). In Sphingopyxis alaskensis (strain DSM 13593 / LMG 18877 / RB2256) (Sphingomonas alaskensis), this protein is ATP synthase subunit b.